Consider the following 191-residue polypeptide: MSLSPHQKTAGGLVLVVAVMGAASFAAVPFYNWFCRVTGFAGTTAVATEAPAEVLDRTVKVRFDASREAGMPWEFRPLQREMKLKIGETGLAFYEAYNPTDRTVAGTASYNVTPDAAGGYFAKIACFCFTEQVLAPGERVEMPVTFYVDPAIIDDPDGRYVRQITLSYTFHETALTEEQAALAAESATDVN.

Residues 1–9 (MSLSPHQKT) lie on the Cytoplasmic side of the membrane. Residues 10–30 (AGGLVLVVAVMGAASFAAVPF) traverse the membrane as a helical; Signal-anchor for type II membrane protein segment. Residues 31 to 191 (YNWFCRVTGF…LAAESATDVN (161 aa)) are Periplasmic-facing.

This sequence belongs to the COX11/CtaG family.

Its subcellular location is the cell inner membrane. In terms of biological role, exerts its effect at some terminal stage of cytochrome c oxidase synthesis, probably by being involved in the insertion of the copper B into subunit I. The sequence is that of Cytochrome c oxidase assembly protein CtaG from Cereibacter sphaeroides (strain ATCC 17023 / DSM 158 / JCM 6121 / CCUG 31486 / LMG 2827 / NBRC 12203 / NCIMB 8253 / ATH 2.4.1.) (Rhodobacter sphaeroides).